The sequence spans 339 residues: Tetraacyldisaccharide 4'-kinase (339 aa).

58 to 65 serves as a coordination point for ATP; sequence TVGGSGKT.

Belongs to the LpxK family.

The enzyme catalyses a lipid A disaccharide + ATP = a lipid IVA + ADP + H(+). It participates in glycolipid biosynthesis; lipid IV(A) biosynthesis; lipid IV(A) from (3R)-3-hydroxytetradecanoyl-[acyl-carrier-protein] and UDP-N-acetyl-alpha-D-glucosamine: step 6/6. In terms of biological role, transfers the gamma-phosphate of ATP to the 4'-position of a tetraacyldisaccharide 1-phosphate intermediate (termed DS-1-P) to form tetraacyldisaccharide 1,4'-bis-phosphate (lipid IVA). In Shewanella baltica (strain OS155 / ATCC BAA-1091), this protein is Tetraacyldisaccharide 4'-kinase.